A 90-amino-acid polypeptide reads, in one-letter code: Probable acyl carrier protein (90 aa).

The region spanning 9–90 (QVTVEELSAL…LVNGALKTGV (82 aa)) is the Carrier domain. Position 47 is an O-(pantetheine 4'-phosphoryl)serine (serine 47).

Post-translationally, 4'-phosphopantetheine is transferred from CoA to a specific serine of the apo-ACP-like protein.

Involved in developmentally regulated synthesis of a compound biosynthetically related to polyketide antibiotics which is essential for spore color in Streptomyces coelicolor. This is Probable acyl carrier protein from Streptomyces coelicolor (strain ATCC BAA-471 / A3(2) / M145).